A 43-amino-acid chain; its full sequence is uncharacterized protein (43 aa).

The protein belongs to the ELIP/psbS family.

It localises to the plastid. It is found in the chloroplast. Its function is as follows. Possible role in chlorophyll and/or carotenoid binding. This is an uncharacterized protein from Cyanidium caldarium (Red alga).